The following is a 159-amino-acid chain: Protein phosphatase 1 regulatory subunit 17 (159 aa).

Disordered regions lie at residues 1–79 (MSTE…HIPP) and 98–127 (RIPK…PALH). Composition is skewed to basic and acidic residues over residues 62–73 (SDQKKPRRKDTP) and 111–124 (SDME…KDTP). Residues Thr-72 and Thr-123 each carry the phosphothreonine; by PKG/PRKG1 modification.

Post-translationally, substrate for cGMP-dependent protein kinase. Phosphorylation of Thr-72 and Thr-123 is required for its phosphatase activity. Phosphorylated by PRKG1 isoform alpha. In terms of tissue distribution, expressed in Purkinje cells of the cerebellum, hippocampus, pons, medulla and eye.

Functionally, inhibits phosphatase activities of protein phosphatase 1 (PP1) and protein phosphatase 2A (PP2A) complexes. This is Protein phosphatase 1 regulatory subunit 17 (Ppp1r17) from Mus musculus (Mouse).